A 903-amino-acid polypeptide reads, in one-letter code: Disintegrin and metalloproteinase domain-containing protein 12 (903 aa).

Residues 1-31 (MAERPARRAPPARALLLALAGALLAPRAARG) form the signal peptide. Residues 32-205 (MSLWDQRGTY…SQMRARRHKR (174 aa)) constitute a propeptide that is removed on maturation. N-linked (GlcNAc...) asparagine glycans are attached at residues Asn112, Asn147, and Asn157. A Cysteine switch motif is present at residues 175–182 (GLCGSQHN). Cys177 serves as a coordination point for Zn(2+). Residues Asn182 and Asn185 are each glycosylated (N-linked (GlcNAc...) asparagine). Topologically, residues 206–706 (ETLKMTKYVE…GPIRQADNQG (501 aa)) are extracellular. Residues 212 to 414 (KYVELVIVAD…GMGMCLFNLP (203 aa)) enclose the Peptidase M12B domain. Disulfide bonds link Cys323–Cys409, Cys365–Cys393, and Cys367–Cys376. Residue His348 coordinates Zn(2+). Glu349 is an active-site residue. 2 residues coordinate Zn(2+): His352 and His358. The Disintegrin domain maps to 422–508 (GRKCGNGYVE…HCPANVYLHD (87 aa)). Residue Asn450 is glycosylated (N-linked (GlcNAc...) asparagine). An intrachain disulfide couples Cys480 to Cys500. Asn649 carries an N-linked (GlcNAc...) asparagine glycan. The 33-residue stretch at 654–686 (GVHKCAMQCHGRGVCNNRKNCHCEAHWAPPFCD) folds into the EGF-like domain. Cystine bridges form between Cys658/Cys668, Cys662/Cys674, and Cys676/Cys685. The helical transmembrane segment at 707-727 (LTVGILVSILCLLAAGFVVYL) threads the bilayer. The Cytoplasmic portion of the chain corresponds to 728-903 (KRKTLMRLLF…PRPSHNAYIK (176 aa)). Disordered regions lie at residues 753–790 (SRTP…HSLK) and 819–903 (HQTP…AYIK). 2 short sequence motifs (SH3-binding; class II) span residues 824-830 (APSGPAR) and 846-852 (KPSPPQK). 3 short sequence motifs (SH3-binding; class I) span residues 830 to 837 (RPLPASPA), 852 to 858 (KPLPADP), and 881 to 887 (RPAPIRP). A compositionally biased stretch (pro residues) spans 847–856 (PSPPQKPLPA). The residue at position 901 (Tyr901) is a Phosphotyrosine; by SRC.

In terms of assembly, interacts with alpha-actinin-2 and with syndecans. Interacts with SH3PXD2A. Interacts with FST3. Interacts with RACK1; the interaction is required for PKC-dependent translocation of ADAM12 to the cell membrane. It depends on Zn(2+) as a cofactor. The precursor is cleaved by a furin endopeptidase. Expressed during early developing mesenchymal cells that give rise to skeletal muscle, bones and visceral organs. Not expressed in adult normal muscle but expressed in regenerating muscle.

Its subcellular location is the membrane. Functionally, involved in skeletal muscle regeneration, specifically at the onset of cell fusion. Also involved in macrophage-derived giant cells (MGC) and osteoclast formation from mononuclear precursors. The protein is Disintegrin and metalloproteinase domain-containing protein 12 (Adam12) of Mus musculus (Mouse).